Reading from the N-terminus, the 342-residue chain is viral G-protein coupled receptor (342 aa).

The Extracellular segment spans residues 1 to 51; the sequence is MAAEDFLTIFLDDDESWNETLNMSGYDYSGNFSLEVSVCEMTTVVPYTWNV. 3 N-linked (GlcNAc...) asparagine; by host glycosylation sites follow: N18, N22, and N31. The helical transmembrane segment at 52 to 72 threads the bilayer; sequence GILSLIFLINVLGNGLVTYIF. The Cytoplasmic portion of the chain corresponds to 73–92; sequence CKHRSRAGAIDILLLGICLN. A helical transmembrane segment spans residues 93–113; it reads SLCLSISLLAEVLMFLFPNII. At 114–121 the chain is on the extracellular side; the sequence is STGLCRLE. Residues 122 to 142 form a helical membrane-spanning segment; sequence IFFYYLYVYLDIFSVVCVSLV. Residues 143 to 159 lie on the Cytoplasmic side of the membrane; the sequence is RYLLVAYSTRSWPKKQS. Residues 160 to 180 form a helical membrane-spanning segment; it reads LGWVLTSAALLIALVLSGDAC. At 181–217 the chain is on the extracellular side; sequence RHRSRVVDPVSKQAMCYENAGNMTADWRLHVRTVSVT. Residues 218–238 form a helical membrane-spanning segment; it reads AGFLLPLALLILFYALTWCVV. Topologically, residues 239–251 are cytoplasmic; the sequence is RRTKLQARRKVRG. A helical transmembrane segment spans residues 252-272; that stretch reads VIVAVVLLFFVFCFPYHVLNL. Residues 273–293 are Extracellular-facing; the sequence is LDTLLRRRWIRDSCYTRGLIN. Residues 294–314 traverse the membrane as a helical segment; it reads VGLAVTSLLQALYSAVVPLIY. Over 315–342 the chain is Cytoplasmic; that stretch reads SCLGSLFRQRMYGLFQSLRQSFMSGATT.

This sequence belongs to the G-protein coupled receptor 1 family. In terms of assembly, interacts with protein K7; this interaction promotes vGPCR proteasomal degradation. Interacts with host CADM1; this interaction is essential for chronic NF-kappa-B activation.

The protein resides in the host cell membrane. Functionally, receptor that signals constitutively via several signaling pathways including PI3K/AKT as well as mitogen- and stress-activated/MAP kinases. Promotes host cell proliferation and survival, modulates cell migration, stimulates angiogenesis, and recruits inflammatory cells, both in expressing cells and in neighboring cells. Maintains chronic activation of NF-kappa-B via interaction with host CADM1. The chain is viral G-protein coupled receptor (ORF74) from Human herpesvirus 8 type P (isolate GK18) (HHV-8).